Here is a 706-residue protein sequence, read N- to C-terminus: G2/M phase-specific E3 ubiquitin-protein ligase (706 aa).

The C2HC pre-PHD-type zinc-finger motif lies at 11-51 (NLACVFCRKNDDCPNKYGEKKTKEKWNLTVHYYCLLMSSGI). The segment at 79 to 128 (LKCCVCKKNGASIGCVAPRCKRSYHFPCGLQRECIFQFTGNFASFCWNHR) adopts a PHD-type 1 zinc-finger fold. The PHD-type 2; degenerate zinc-finger motif lies at 143-193 (PCTICLEFIEPIPSYNILRSPCCKNAWFHRDCLQVQAINAGVFFFRCTICS). A PHD-type 3 zinc finger spans residues 237-286 (RCRCKEGRDYNAPDSKWEIKRCQCCGSSGTHLACSSLRSWEQNWECLECR). Positions 371–698 (IWTSALDAFR…IRNTLKLEKE (328 aa)) constitute an HECT domain.

The protein resides in the nucleus. The protein localises to the nucleolus. It is found in the cytoplasm. It catalyses the reaction S-ubiquitinyl-[E2 ubiquitin-conjugating enzyme]-L-cysteine + [acceptor protein]-L-lysine = [E2 ubiquitin-conjugating enzyme]-L-cysteine + N(6)-ubiquitinyl-[acceptor protein]-L-lysine.. It functions in the pathway protein modification; protein ubiquitination. E3 ubiquitin-protein ligase which accepts ubiquitin from an E2 ubiquitin-conjugating enzyme in the form of a thioester and then directly transfers the ubiquitin to targeted substrates. Essential in early embryonic development to prevent apoptotic death. This Macaca fascicularis (Crab-eating macaque) protein is G2/M phase-specific E3 ubiquitin-protein ligase (G2E3).